Here is a 241-residue protein sequence, read N- to C-terminus: Ribulose-phosphate 3-epimerase 2 (241 aa).

Ser21 is a substrate binding site. Residues His46, Asp48, and His79 each contribute to the a divalent metal cation site. Asp48 functions as the Proton acceptor in the catalytic mechanism. Substrate is bound by residues His79, Gly155 to Gly158, Asp192 to Gly194, and Gly214 to Ser215. Asp192 serves as a coordination point for a divalent metal cation. The Proton donor role is filled by Asp192.

It belongs to the ribulose-phosphate 3-epimerase family. Requires a divalent metal cation as cofactor.

It catalyses the reaction D-ribulose 5-phosphate = D-xylulose 5-phosphate. Its pathway is carbohydrate degradation. Functionally, catalyzes the reversible epimerization of D-ribulose 5-phosphate to D-xylulose 5-phosphate. The protein is Ribulose-phosphate 3-epimerase 2 of Cupriavidus necator (strain ATCC 17699 / DSM 428 / KCTC 22496 / NCIMB 10442 / H16 / Stanier 337) (Ralstonia eutropha).